The following is an 845-amino-acid chain: Alanine--tRNA ligase (845 aa).

4 residues coordinate Zn(2+): His-552, His-556, Cys-653, and His-657.

The protein belongs to the class-II aminoacyl-tRNA synthetase family. It depends on Zn(2+) as a cofactor.

The protein localises to the cytoplasm. It carries out the reaction tRNA(Ala) + L-alanine + ATP = L-alanyl-tRNA(Ala) + AMP + diphosphate. In terms of biological role, catalyzes the attachment of alanine to tRNA(Ala) in a two-step reaction: alanine is first activated by ATP to form Ala-AMP and then transferred to the acceptor end of tRNA(Ala). Also edits incorrectly charged Ser-tRNA(Ala) and Gly-tRNA(Ala) via its editing domain. The chain is Alanine--tRNA ligase from Campylobacter hominis (strain ATCC BAA-381 / DSM 21671 / CCUG 45161 / LMG 19568 / NCTC 13146 / CH001A).